A 78-amino-acid polypeptide reads, in one-letter code: Structural DNA-binding protein p10 (78 aa).

Residues 1–27 (MPTKAGTKSTANKKTTKGSSKSGSSRG) are compositionally biased toward low complexity. Residues 1–41 (MPTKAGTKSTANKKTTKGSSKSGSSRGHTGKTHASSSMHSG) are disordered.

This sequence belongs to the asfivirus P10 family.

The protein resides in the virion. In terms of biological role, may play a role in genome packaging through direct interaction with viral DNA. Binds to ssDNA and dsDNA with the same apparent affinity in vitro. The chain is Structural DNA-binding protein p10 from African swine fever virus (strain Badajoz 1971 Vero-adapted) (Ba71V).